A 150-amino-acid chain; its full sequence is UPF0178 protein PSEEN5341 (150 aa).

It belongs to the UPF0178 family.

The chain is UPF0178 protein PSEEN5341 from Pseudomonas entomophila (strain L48).